The sequence spans 146 residues: NADH-quinone oxidoreductase subunit A (146 aa).

3 helical membrane passes run 14 to 34 (FAVFFVVAIGLCCLMLMGAFF), 66 to 86 (FYLVAMFFVIFDVEALYLYAW), and 96 to 116 (VGFIEAAIFILVLLAGLVYLV).

This sequence belongs to the complex I subunit 3 family. In terms of assembly, NDH-1 is composed of 13 different subunits. Subunits NuoA, H, J, K, L, M, N constitute the membrane sector of the complex.

The protein localises to the cell inner membrane. The catalysed reaction is a quinone + NADH + 5 H(+)(in) = a quinol + NAD(+) + 4 H(+)(out). In terms of biological role, NDH-1 shuttles electrons from NADH, via FMN and iron-sulfur (Fe-S) centers, to quinones in the respiratory chain. The immediate electron acceptor for the enzyme in this species is believed to be ubiquinone. Couples the redox reaction to proton translocation (for every two electrons transferred, four hydrogen ions are translocated across the cytoplasmic membrane), and thus conserves the redox energy in a proton gradient. This chain is NADH-quinone oxidoreductase subunit A, found in Serratia proteamaculans (strain 568).